A 246-amino-acid chain; its full sequence is MDQGPINRPHFFFTTAPMPCPYLEGHLERKMVTDLTGPEAERLHESLSRAGFRRSHTIAYAPVCPGCTACVPVRIRARAFVKNKSFRRIVRANAGVTAEYVPARATVEQFHLFSQYQQARHGESDMALMGFFDYRSMVEDSPISTSIAEFREAGGELVAACLIDHLSDGLSAVYSFFNTTLPQSRGLGTWMILWMVDETVRRDLDHVYLGYWIAESSKMAYKERFQPLEVFGRRGWIAFDERGRPG.

Belongs to the R-transferase family. Bpt subfamily.

The protein localises to the cytoplasm. It catalyses the reaction N-terminal L-glutamyl-[protein] + L-leucyl-tRNA(Leu) = N-terminal L-leucyl-L-glutamyl-[protein] + tRNA(Leu) + H(+). The enzyme catalyses N-terminal L-aspartyl-[protein] + L-leucyl-tRNA(Leu) = N-terminal L-leucyl-L-aspartyl-[protein] + tRNA(Leu) + H(+). Functionally, functions in the N-end rule pathway of protein degradation where it conjugates Leu from its aminoacyl-tRNA to the N-termini of proteins containing an N-terminal aspartate or glutamate. The protein is Aspartate/glutamate leucyltransferase of Rhodospirillum rubrum (strain ATCC 11170 / ATH 1.1.1 / DSM 467 / LMG 4362 / NCIMB 8255 / S1).